Here is a 372-residue protein sequence, read N- to C-terminus: Lung adenoma susceptibility protein 2 (372 aa).

Positions 1 to 31 are cleaved as a signal peptide; the sequence is MAKSKTKHRLCSQESSVSALLASCTLSGSNS. Ser-161 bears the Phosphoserine mark. The disordered stretch occupies residues 248-268; the sequence is KSPVPVNSDDSPQQTSRAKSA. Residues 255–265 show a composition bias toward polar residues; sequence SDDSPQQTSRA.

The protein localises to the secreted. In terms of biological role, might play a role in cell proliferation. The polypeptide is Lung adenoma susceptibility protein 2 (LAS2) (Homo sapiens (Human)).